The following is an 828-amino-acid chain: Periplasmic nitrate reductase (828 aa).

The tat-type signal signal peptide spans 1 to 31 (MKLSRRSFMKANAVAAAAAAAGLSVPGVARA). The 4Fe-4S Mo/W bis-MGD-type domain maps to 39–95 (IKWDKAPCRFCGTGCGVLVGTQQGRVVACQGDPDAPVNRGLNCIKGYFLPKIMYGKD). [4Fe-4S] cluster-binding residues include cysteine 46, cysteine 49, cysteine 53, and cysteine 81. Residues lysine 83, glutamine 150, asparagine 175, cysteine 179, 212 to 219 (WGSNMAEM), 243 to 247 (STYQH), 262 to 264 (QSD), methionine 372, glutamine 376, asparagine 482, 508 to 509 (SD), lysine 531, aspartate 558, and 718 to 727 (TGRVLEHWHT) contribute to the Mo-bis(molybdopterin guanine dinucleotide) site. Phenylalanine 794 is a substrate binding site. Mo-bis(molybdopterin guanine dinucleotide) is bound by residues asparagine 802 and lysine 819.

The protein belongs to the prokaryotic molybdopterin-containing oxidoreductase family. NasA/NapA/NarB subfamily. As to quaternary structure, component of the periplasmic nitrate reductase NapAB complex composed of NapA and NapB. [4Fe-4S] cluster is required as a cofactor. Mo-bis(molybdopterin guanine dinucleotide) serves as cofactor. Predicted to be exported by the Tat system. The position of the signal peptide cleavage has not been experimentally proven.

The protein resides in the periplasm. It catalyses the reaction 2 Fe(II)-[cytochrome] + nitrate + 2 H(+) = 2 Fe(III)-[cytochrome] + nitrite + H2O. Catalytic subunit of the periplasmic nitrate reductase complex NapAB. Receives electrons from NapB and catalyzes the reduction of nitrate to nitrite. The sequence is that of Periplasmic nitrate reductase from Escherichia coli O127:H6 (strain E2348/69 / EPEC).